The following is a 334-amino-acid chain: Lipoyl synthase (334 aa).

The tract at residues 8–33 (LNNDTRPKVEAPARPRHPEKAHRPDT) is disordered. Positions 12–33 (TRPKVEAPARPRHPEKAHRPDT) are enriched in basic and acidic residues. Residues cysteine 68, cysteine 73, cysteine 79, cysteine 94, cysteine 98, cysteine 101, and serine 307 each coordinate [4Fe-4S] cluster. One can recognise a Radical SAM core domain in the interval 80–296 (WEKRHATFMI…ETTAYAKGFL (217 aa)).

It belongs to the radical SAM superfamily. Lipoyl synthase family. [4Fe-4S] cluster is required as a cofactor.

The protein resides in the cytoplasm. It catalyses the reaction [[Fe-S] cluster scaffold protein carrying a second [4Fe-4S](2+) cluster] + N(6)-octanoyl-L-lysyl-[protein] + 2 oxidized [2Fe-2S]-[ferredoxin] + 2 S-adenosyl-L-methionine + 4 H(+) = [[Fe-S] cluster scaffold protein] + N(6)-[(R)-dihydrolipoyl]-L-lysyl-[protein] + 4 Fe(3+) + 2 hydrogen sulfide + 2 5'-deoxyadenosine + 2 L-methionine + 2 reduced [2Fe-2S]-[ferredoxin]. It functions in the pathway protein modification; protein lipoylation via endogenous pathway; protein N(6)-(lipoyl)lysine from octanoyl-[acyl-carrier-protein]: step 2/2. In terms of biological role, catalyzes the radical-mediated insertion of two sulfur atoms into the C-6 and C-8 positions of the octanoyl moiety bound to the lipoyl domains of lipoate-dependent enzymes, thereby converting the octanoylated domains into lipoylated derivatives. The chain is Lipoyl synthase from Methylorubrum populi (strain ATCC BAA-705 / NCIMB 13946 / BJ001) (Methylobacterium populi).